The primary structure comprises 553 residues: Methyl-coenzyme M reductase II subunit alpha (553 aa).

Q150 serves as a coordination point for coenzyme F430. Residues R228, K259–H260, and R273 contribute to the coenzyme B site. Position 260 is a pros-methylhistidine (H260). At R274 the chain carries 5-methylarginine. Position 335 (Y335) interacts with coenzyme M. A 2-methylglutamine modification is found at Q402. Y446 is a binding site for coenzyme M. G447 is modified (1-thioglycine). Position 452 is a (Z)-2,3-didehydroaspartate (D452). C454 carries the post-translational modification S-methylcysteine.

Belongs to the methyl-coenzyme M reductase alpha subunit family. In terms of assembly, MCR is a hexamer of two alpha, two beta, and two gamma chains, forming a dimer of heterotrimers. Requires coenzyme F430 as cofactor. In terms of processing, the alpha subunit contains six modified amino acids near the active site region. Is methylated on His-260, Arg-274, Gln-402 and Cys-454, probably by the action of specific S-adenosylmethionine-dependent methyltransferases. Also contains a thioglycine at position 447, forming a thiopeptide bond. Contains a didehydroaspartate residue at position 452. The methylation on C5 of Arg-274 is a post-translational methylation not essential in vivo, but which plays a role for the stability and structural integrity of MCR.

It carries out the reaction coenzyme B + methyl-coenzyme M = methane + coenzyme M-coenzyme B heterodisulfide. It functions in the pathway one-carbon metabolism; methyl-coenzyme M reduction; methane from methyl-coenzyme M: step 1/1. Component of the methyl-coenzyme M reductase (MCR) I that catalyzes the reductive cleavage of methyl-coenzyme M (CoM-S-CH3 or 2-(methylthio)ethanesulfonate) using coenzyme B (CoB or 7-mercaptoheptanoylthreonine phosphate) as reductant which results in the production of methane and the mixed heterodisulfide of CoB and CoM (CoM-S-S-CoB). This is the final step in methanogenesis. The sequence is that of Methyl-coenzyme M reductase II subunit alpha (mrtA) from Methanothermobacter thermautotrophicus (strain ATCC 29096 / DSM 1053 / JCM 10044 / NBRC 100330 / Delta H) (Methanobacterium thermoautotrophicum).